A 213-amino-acid chain; its full sequence is DNA-directed RNA polymerase subunit alpha (213 aa).

This sequence belongs to the RNA polymerase alpha chain family. As to quaternary structure, in plastids the minimal PEP RNA polymerase catalytic core is composed of four subunits: alpha, beta, beta', and beta''. When a (nuclear-encoded) sigma factor is associated with the core the holoenzyme is formed, which can initiate transcription.

Its subcellular location is the plastid. The protein localises to the chloroplast. It carries out the reaction RNA(n) + a ribonucleoside 5'-triphosphate = RNA(n+1) + diphosphate. Functionally, DNA-dependent RNA polymerase catalyzes the transcription of DNA into RNA using the four ribonucleoside triphosphates as substrates. In Euglena stellata, this protein is DNA-directed RNA polymerase subunit alpha (rpoA).